The primary structure comprises 249 residues: Bis(5'-nucleosyl)-tetraphosphatase PrpE [asymmetrical] (249 aa).

It belongs to the PrpE family. It depends on Ni(2+) as a cofactor.

The catalysed reaction is P(1),P(4)-bis(5'-guanosyl) tetraphosphate + H2O = GMP + GTP + 2 H(+). Functionally, asymmetrically hydrolyzes Ap4p to yield AMP and ATP. The protein is Bis(5'-nucleosyl)-tetraphosphatase PrpE [asymmetrical] of Bacillus velezensis (strain DSM 23117 / BGSC 10A6 / LMG 26770 / FZB42) (Bacillus amyloliquefaciens subsp. plantarum).